Here is a 289-residue protein sequence, read N- to C-terminus: ATP synthase gamma chain (289 aa).

This sequence belongs to the ATPase gamma chain family. As to quaternary structure, F-type ATPases have 2 components, CF(1) - the catalytic core - and CF(0) - the membrane proton channel. CF(1) has five subunits: alpha(3), beta(3), gamma(1), delta(1), epsilon(1). CF(0) has three main subunits: a, b and c.

Its subcellular location is the cell inner membrane. Functionally, produces ATP from ADP in the presence of a proton gradient across the membrane. The gamma chain is believed to be important in regulating ATPase activity and the flow of protons through the CF(0) complex. The protein is ATP synthase gamma chain of Coxiella burnetii (strain Dugway 5J108-111).